A 24-amino-acid chain; its full sequence is Humanin-like 3 (24 aa).

This sequence belongs to the humanin family. As to expression, highly expressed in testis. Also expressed in kidney, heart, skeletal muscles and brain.

It is found in the secreted. The protein resides in the cytoplasm. Plays a role as a neuroprotective and antiapoptotic factor. The chain is Humanin-like 3 from Homo sapiens (Human).